Reading from the N-terminus, the 138-residue chain is Phosphoribosyl-AMP cyclohydrolase (138 aa).

Mg(2+) is bound at residue aspartate 92. Cysteine 93 is a binding site for Zn(2+). Positions 94 and 96 each coordinate Mg(2+). Positions 109 and 116 each coordinate Zn(2+).

It belongs to the PRA-CH family. Homodimer. It depends on Mg(2+) as a cofactor. Zn(2+) is required as a cofactor.

Its subcellular location is the cytoplasm. It catalyses the reaction 1-(5-phospho-beta-D-ribosyl)-5'-AMP + H2O = 1-(5-phospho-beta-D-ribosyl)-5-[(5-phospho-beta-D-ribosylamino)methylideneamino]imidazole-4-carboxamide. The protein operates within amino-acid biosynthesis; L-histidine biosynthesis; L-histidine from 5-phospho-alpha-D-ribose 1-diphosphate: step 3/9. Catalyzes the hydrolysis of the adenine ring of phosphoribosyl-AMP. The chain is Phosphoribosyl-AMP cyclohydrolase from Clavibacter sepedonicus (Clavibacter michiganensis subsp. sepedonicus).